Consider the following 194-residue polypeptide: UPF0301 protein BT_0659 (194 aa).

It belongs to the UPF0301 (AlgH) family.

The polypeptide is UPF0301 protein BT_0659 (Bartonella tribocorum (strain CIP 105476 / IBS 506)).